The primary structure comprises 152 residues: Clitocypin-2 (152 aa).

The protein belongs to the protease inhibitor I48 family. In terms of assembly, homodimer. In terms of tissue distribution, expressed in all analyzed tissues, but expression was higher in the pileus and in the lower part of the stipe.

Binds and inhibits cysteine proteinases. Inhibits most strongly papain and cathepsin L, more weakly bromelain and cathepsin B while it is completely ineffective against cathepsin H. The sequence is that of Clitocypin-2 (clt2) from Clitocybe nebularis (Clouded agaric).